We begin with the raw amino-acid sequence, 440 residues long: Trigger factor (440 aa).

In terms of domain architecture, PPIase FKBP-type spans 163-248 (GDGVTVDFEG…VKKIESAHLP (86 aa)).

The protein belongs to the FKBP-type PPIase family. Tig subfamily.

It localises to the cytoplasm. It carries out the reaction [protein]-peptidylproline (omega=180) = [protein]-peptidylproline (omega=0). In terms of biological role, involved in protein export. Acts as a chaperone by maintaining the newly synthesized protein in an open conformation. Functions as a peptidyl-prolyl cis-trans isomerase. The protein is Trigger factor of Verminephrobacter eiseniae (strain EF01-2).